Here is a 116-residue protein sequence, read N- to C-terminus: UPF0102 protein ELI_05985 (116 aa).

This sequence belongs to the UPF0102 family.

In Erythrobacter litoralis (strain HTCC2594), this protein is UPF0102 protein ELI_05985.